An 828-amino-acid chain; its full sequence is DNA gyrase subunit A (828 aa).

The 466-residue stretch at 32–497 (LPDVRDGLKP…EVLSLEDEDL (466 aa)) folds into the Topo IIA-type catalytic domain. Catalysis depends on tyrosine 120, which acts as the O-(5'-phospho-DNA)-tyrosine intermediate. The GyrA-box motif lies at 524-530 (QKRGGRG).

It belongs to the type II topoisomerase GyrA/ParC subunit family. In terms of assembly, heterotetramer, composed of two GyrA and two GyrB chains. In the heterotetramer, GyrA contains the active site tyrosine that forms a transient covalent intermediate with DNA, while GyrB binds cofactors and catalyzes ATP hydrolysis.

It is found in the cytoplasm. It carries out the reaction ATP-dependent breakage, passage and rejoining of double-stranded DNA.. Functionally, a type II topoisomerase that negatively supercoils closed circular double-stranded (ds) DNA in an ATP-dependent manner to modulate DNA topology and maintain chromosomes in an underwound state. Negative supercoiling favors strand separation, and DNA replication, transcription, recombination and repair, all of which involve strand separation. Also able to catalyze the interconversion of other topological isomers of dsDNA rings, including catenanes and knotted rings. Type II topoisomerases break and join 2 DNA strands simultaneously in an ATP-dependent manner. The sequence is that of DNA gyrase subunit A from Streptococcus pyogenes serotype M6 (strain ATCC BAA-946 / MGAS10394).